We begin with the raw amino-acid sequence, 515 residues long: MSSTKKPLVLTILDGYGHREEQQDNAILNAKTPVMDVLWQQQPHTLIAASGLDVGLPDGQMGNSEVGHVNLGAGRIVYQDLTRLDKEIKDGDFFTNPTLTAAVDNAVKTGKAVHIMGLLSAGGVHSHEDHIMAMVELAAKRGATAIYLHAFLDGRDTPPRSAESSLKRFTAKFAELGNGRIASIIGRYYAMDRDNRWDRVQLAYDLLTQAKGEFTADNAVAGLQAAYARGENDEFVKPTVIQATGEADAAMNEGDTLIFMNFRADRVRQITRTFVNADFDGFKRDKVVNFGDFIMLTEYAADIKVACAYPPASLTNTFGEWLMKHDKTQLRISETEKYAHVTFFYNGGVEEPFKGEDRILINSPKVATYDLQPEMSSAELTEKLVSAIGSGKYDVIICNYPNGDMVGHTGDYDAAVKAVETLDNCIEQVVAAVKAADGQLLITADHGNAEQMRDPATGQAHTAHTSLPVPLIYVGNKAVKAVEGGKLSDIAPTMLSLMEMEIPQEMTGKPLFIVE.

2 residues coordinate Mn(2+): Asp14 and Ser64. Ser64 acts as the Phosphoserine intermediate in catalysis. Substrate is bound by residues His125, 155 to 156, Arg187, Arg193, 263 to 266, and Lys337; these read RD and RADR. Mn(2+) contacts are provided by Asp404, His408, Asp445, His446, and His464.

Belongs to the BPG-independent phosphoglycerate mutase family. As to quaternary structure, monomer. Mn(2+) is required as a cofactor.

The enzyme catalyses (2R)-2-phosphoglycerate = (2R)-3-phosphoglycerate. It participates in carbohydrate degradation; glycolysis; pyruvate from D-glyceraldehyde 3-phosphate: step 3/5. In terms of biological role, catalyzes the interconversion of 2-phosphoglycerate and 3-phosphoglycerate. The protein is 2,3-bisphosphoglycerate-independent phosphoglycerate mutase of Yersinia pseudotuberculosis serotype O:1b (strain IP 31758).